A 119-amino-acid chain; its full sequence is uncharacterized protein (119 aa).

A coiled-coil region spans residues 1–29 (MKKVGEEEIKQEENEKEKIVKKLNESDVK).

This is an uncharacterized protein from Acidianus sp. F28 (AFV-2).